The primary structure comprises 309 residues: Polyprenal reductase (309 aa).

7 helical membrane-spanning segments follow: residues 12-32, 72-92, 114-134, 151-171, 184-204, 242-262, and 270-290; these read LPLY…FTLI, FYAI…SLIY, IPPI…LHVA, MNLF…ISIM, LHVS…LFWI, LVSC…FLVI, and FIIM…HSWY.

It belongs to the steroid 5-alpha reductase family. Polyprenal reductase subfamily.

It is found in the endoplasmic reticulum membrane. The enzyme catalyses a di-trans,poly-cis-dolichal + NADP(+) = a di-trans,poly-cis-polyprenal + NADPH + H(+). Its pathway is protein modification; protein glycosylation. Plays a key role in early steps of protein N-linked glycosylation by being involved in the conversion of polyprenol into dolichol. Acts as a polyprenal reductase that mediates the reduction of polyprenal into dolichal in a NADP-dependent mechanism. Dolichols are required for the synthesis of dolichol-linked monosaccharides and the oligosaccharide precursor used for N-glycosylation. The chain is Polyprenal reductase from Caenorhabditis elegans.